The primary structure comprises 117 residues: Ribosome-binding factor A (117 aa).

Belongs to the RbfA family. Monomer. Binds 30S ribosomal subunits, but not 50S ribosomal subunits or 70S ribosomes.

It is found in the cytoplasm. One of several proteins that assist in the late maturation steps of the functional core of the 30S ribosomal subunit. Associates with free 30S ribosomal subunits (but not with 30S subunits that are part of 70S ribosomes or polysomes). Required for efficient processing of 16S rRNA. May interact with the 5'-terminal helix region of 16S rRNA. In Lactiplantibacillus plantarum (strain ATCC BAA-793 / NCIMB 8826 / WCFS1) (Lactobacillus plantarum), this protein is Ribosome-binding factor A.